Here is a 514-residue protein sequence, read N- to C-terminus: Threonine synthase (514 aa).

An N6-(pyridoxal phosphate)lysine modification is found at Lys124. Gly277, Asn278, Phe279, Asp281, and Thr449 together coordinate pyridoxal 5'-phosphate. Ser467 is modified (phosphoserine).

Belongs to the threonine synthase family. Pyridoxal 5'-phosphate is required as a cofactor.

It carries out the reaction O-phospho-L-homoserine + H2O = L-threonine + phosphate. The protein operates within amino-acid biosynthesis; L-threonine biosynthesis; L-threonine from L-aspartate: step 5/5. In terms of biological role, catalyzes the gamma-elimination of phosphate from L-phosphohomoserine and the beta-addition of water to produce L-threonine. The sequence is that of Threonine synthase (THR4) from Saccharomyces cerevisiae (strain ATCC 204508 / S288c) (Baker's yeast).